A 261-amino-acid polypeptide reads, in one-letter code: TM2 domain-containing protein 3 (261 aa).

The N-terminal stretch at 1 to 44 (MEAAAEPLRSVRHLSRVLLFLSQCYILSGDGSLNLEHSQPLAQA) is a signal peptide. Residues 45–193 (IKDPGPTRTF…RTFPKLLYCN (149 aa)) are Extracellular-facing. Residues Asn101, Asn136, Asn154, Asn171, Asn183, and Asn193 are each glycosylated (N-linked (GlcNAc...) asparagine). The helical transmembrane segment at 194–214 (WTGGYKWSTALALSITLGGFG) threads the bilayer. Positions 197-244 (GYKWSTALALSITLGGFGADRFYLGQWREGLGKLFSFGGLGIWTLIDV) constitute a TM2 domain. The Cytoplasmic portion of the chain corresponds to 215–229 (ADRFYLGQWREGLGK). Residues 230 to 250 (LFSFGGLGIWTLIDVLLIGVG) form a helical membrane-spanning segment. The Extracellular portion of the chain corresponds to 251 to 261 (YVGPADGSLYI).

It belongs to the TM2 family.

It localises to the membrane. In Mus musculus (Mouse), this protein is TM2 domain-containing protein 3 (Tm2d3).